Here is a 290-residue protein sequence, read N- to C-terminus: Outer dense fiber protein 4 (290 aa).

The residue at position 28 (S28) is a Phosphoserine. A run of 4 helical transmembrane segments spans residues 44–64 (AQVV…LMVF), 132–152 (ISFI…HLPY), 164–184 (LIGI…LLLF), and 201–221 (IGWS…CGIL). Residues 262–290 (ADILDPTQDDQKPLSSDNIALPPNPDTTD) are disordered.

The protein localises to the membrane. Component of the outer dense fibers (ODF) of spermatozoa which could be involved in sperm tail structure, sperm movement and general organization of cellular cytoskeleton. The polypeptide is Outer dense fiber protein 4 (Odf4) (Rattus norvegicus (Rat)).